Consider the following 120-residue polypeptide: Large ribosomal subunit protein uL18 (120 aa).

Basic and acidic residues predominate over residues 1–10 (MSTPRKEQTQ). The disordered stretch occupies residues 1–25 (MSTPRKEQTQKRHRRLRRHLEGTPE).

It belongs to the universal ribosomal protein uL18 family. Part of the 50S ribosomal subunit; part of the 5S rRNA/L5/L18/L25 subcomplex. Contacts the 5S and 23S rRNAs.

This is one of the proteins that bind and probably mediate the attachment of the 5S RNA into the large ribosomal subunit, where it forms part of the central protuberance. This is Large ribosomal subunit protein uL18 from Synechococcus sp. (strain RCC307).